Consider the following 442-residue polypeptide: Transducin beta-like protein 2 (442 aa).

The tract at residues glutamate 36–histidine 71 is disordered. Residues serine 52–lysine 65 are compositionally biased toward basic residues. WD repeat units follow at residues serine 84–histidine 123, valine 130–phenylalanine 170, lysine 182–asparagine 222, asparagine 224–glutamine 263, glycine 273–glutamine 312, glutamate 323–tyrosine 362, and valine 366–valine 404. Lysine 164 participates in a covalent cross-link: Glycyl lysine isopeptide (Lys-Gly) (interchain with G-Cter in SUMO2). Residue threonine 428 is modified to Phosphothreonine.

This is Transducin beta-like protein 2 (Tbl2) from Mus musculus (Mouse).